Consider the following 503-residue polypeptide: D-xylose-proton symporter-like 1 (503 aa).

Residues Met-1–Gly-23 are disordered. A compositionally biased stretch (low complexity) spans Gln-8 to Gly-23. Transmembrane regions (helical) follow at residues Phe-51 to Met-73, Ile-95 to Ala-115, Phe-129 to Ile-149, Val-152 to Thr-172, Val-190 to Trp-210, Met-213 to Ala-233, Ala-305 to Leu-325, Ile-346 to Asp-366, Leu-374 to Phe-394, Ala-405 to Ile-425, Gly-437 to Ser-457, and Ile-467 to Val-487.

It belongs to the major facilitator superfamily. Sugar transporter (TC 2.A.1.1) family.

It localises to the membrane. This Arabidopsis thaliana (Mouse-ear cress) protein is D-xylose-proton symporter-like 1.